Consider the following 402-residue polypeptide: Formate-dependent phosphoribosylglycinamide formyltransferase (402 aa).

N(1)-(5-phospho-beta-D-ribosyl)glycinamide is bound by residues 23–24 (EL) and Glu-83. Residues Arg-116, Lys-157, 162–167 (SSGKGQ), 197–200 (ESQI), and Glu-205 each bind ATP. The region spanning 121 to 316 (RLAAEELGLP…EFELHARAIL (196 aa)) is the ATP-grasp domain. Mg(2+) is bound by residues Glu-275 and Glu-287. Residues Asp-294, Lys-363, and 370-371 (RR) each bind N(1)-(5-phospho-beta-D-ribosyl)glycinamide.

The protein belongs to the PurK/PurT family. Homodimer.

It catalyses the reaction N(1)-(5-phospho-beta-D-ribosyl)glycinamide + formate + ATP = N(2)-formyl-N(1)-(5-phospho-beta-D-ribosyl)glycinamide + ADP + phosphate + H(+). It functions in the pathway purine metabolism; IMP biosynthesis via de novo pathway; N(2)-formyl-N(1)-(5-phospho-D-ribosyl)glycinamide from N(1)-(5-phospho-D-ribosyl)glycinamide (formate route): step 1/1. In terms of biological role, involved in the de novo purine biosynthesis. Catalyzes the transfer of formate to 5-phospho-ribosyl-glycinamide (GAR), producing 5-phospho-ribosyl-N-formylglycinamide (FGAR). Formate is provided by PurU via hydrolysis of 10-formyl-tetrahydrofolate. The chain is Formate-dependent phosphoribosylglycinamide formyltransferase from Acinetobacter baumannii (strain ATCC 17978 / DSM 105126 / CIP 53.77 / LMG 1025 / NCDC KC755 / 5377).